The sequence spans 967 residues: Regulator of G-protein signaling 3 (967 aa).

The PDZ domain maps to 18-95 (QITIRRGKDG…EIILLVWRVV (78 aa)). The interval 115 to 135 (THDLLSPPNKREKNCTHGAPT) is disordered. An Omega-N-methylarginine modification is found at R167. The segment at 389–705 (QLAATPTERK…EGGLSLRVQN (317 aa)) is disordered. Composition is skewed to polar residues over residues 476 to 486 (LPSSKNPSPSQ), 512 to 549 (SPSSEDIATCQNPPQSPETSTSKDSPPGQGSSPTTEVP), and 577 to 597 (SSASDQNVLPSQESPPSQGSL). The segment covering 650 to 676 (GEDEDAEEGEEGEEGEEDEEDDTNDDN) has biased composition (acidic residues). Residues 677–687 (YGDRNEAKRSS) are compositionally biased toward basic and acidic residues. A phosphoserine mark is found at S713, S716, S748, and S777. The tract at residues 807-830 (FRRRNESPGAQPAGKADKTTKSFK) is disordered. The span at 821–830 (KADKTTKSFK) shows a compositional bias: basic and acidic residues. One can recognise an RGS domain in the interval 842–967 (SLEKLLLHKY…INQKKMSPPL (126 aa)).

Binds EFNB1 and EFNB2. Binds the GNB1-GNG2 heterodimer. Binds ESR1. In terms of processing, phosphorylated by cyclic GMP-dependent protein kinase. Post-translationally, ISGylated. In terms of tissue distribution, detected in kidney, uterus, ovary, heart, brain, spleen, lung and testis.

It is found in the cytoplasm. Its subcellular location is the membrane. The protein resides in the nucleus. Functionally, down-regulates signaling from heterotrimeric G-proteins by increasing the GTPase activity of the alpha subunits, thereby driving them into their inactive GDP-bound form. Down-regulates G-protein-mediated release of inositol phosphates and activation of MAP kinases. This is Regulator of G-protein signaling 3 (Rgs3) from Rattus norvegicus (Rat).